The primary structure comprises 229 residues: Ribonuclease 3 (229 aa).

The RNase III domain maps to 5–127 (LNRLERKLGH…LIGAIYLDAG (123 aa)). Residue Glu-40 coordinates Mg(2+). The active site involves Asp-44. Mg(2+)-binding residues include Asp-113 and Glu-116. The active site involves Glu-116. Positions 154-224 (DPKTRLQEFL…AAAALVALGV (71 aa)) constitute a DRBM domain.

Belongs to the ribonuclease III family. Homodimer. The cofactor is Mg(2+).

The protein localises to the cytoplasm. It catalyses the reaction Endonucleolytic cleavage to 5'-phosphomonoester.. Functionally, digests double-stranded RNA. Involved in the processing of primary rRNA transcript to yield the immediate precursors to the large and small rRNAs (23S and 16S). Processes some mRNAs, and tRNAs when they are encoded in the rRNA operon. Processes pre-crRNA and tracrRNA of type II CRISPR loci if present in the organism. The sequence is that of Ribonuclease 3 from Azotobacter vinelandii (strain DJ / ATCC BAA-1303).